Reading from the N-terminus, the 215-residue chain is LysM and putative peptidoglycan-binding domain-containing protein 1 (215 aa).

The region spanning 37–81 (LEHQVQPGDTLQGLALRYGVSMEQIKRANRLYTNDSIFLKKSLYI) is the LysM domain. Polar residues-rich tracts occupy residues 86 to 103 (GQSDLSDDQNSQEGSETE) and 173 to 189 (GNRTPSRQNSPQTQQRS). Disordered stretches follow at residues 86–133 (GQSD…PVDF) and 148–203 (AVKK…TRAS).

The chain is LysM and putative peptidoglycan-binding domain-containing protein 1 (lysmd1) from Xenopus laevis (African clawed frog).